The sequence spans 205 residues: MRPLTPRQTEILELIKRNIADTGMPPTRAEIATRLGFKSANAAEEHLKALAKKGCIEIMPGTSRGIRLTQEDAEVELGLPLIGQVAAGEPILAQEHVEQYFQVDPHMFKPAANFLLRVRGDSMKNIGILEGDLLAVHKMQEAKNGQVVVARVEDDVTVKRFEKKGNVIYLHAENEDYAPIKVDLTCQSLTIEGLAVGVIRNGAWL.

Residues 28 to 48 (RAEIATRLGFKSANAAEEHLK) constitute a DNA-binding region (H-T-H motif). Active-site for autocatalytic cleavage activity residues include Ser-122 and Lys-159.

The protein belongs to the peptidase S24 family. Homodimer.

It carries out the reaction Hydrolysis of Ala-|-Gly bond in repressor LexA.. In terms of biological role, represses a number of genes involved in the response to DNA damage (SOS response), including recA and lexA. In the presence of single-stranded DNA, RecA interacts with LexA causing an autocatalytic cleavage which disrupts the DNA-binding part of LexA, leading to derepression of the SOS regulon and eventually DNA repair. The protein is LexA repressor of Shewanella denitrificans (strain OS217 / ATCC BAA-1090 / DSM 15013).